Consider the following 252-residue polypeptide: Pyrroloquinoline-quinone synthase (252 aa).

The protein belongs to the PqqC family.

It catalyses the reaction 6-(2-amino-2-carboxyethyl)-7,8-dioxo-1,2,3,4,7,8-hexahydroquinoline-2,4-dicarboxylate + 3 O2 = pyrroloquinoline quinone + 2 H2O2 + 2 H2O + H(+). The protein operates within cofactor biosynthesis; pyrroloquinoline quinone biosynthesis. Ring cyclization and eight-electron oxidation of 3a-(2-amino-2-carboxyethyl)-4,5-dioxo-4,5,6,7,8,9-hexahydroquinoline-7,9-dicarboxylic-acid to PQQ. The chain is Pyrroloquinoline-quinone synthase from Acinetobacter baumannii (strain ACICU).